A 562-amino-acid polypeptide reads, in one-letter code: Berberine bridge enzyme-like C-1 (562 aa).

The signal sequence occupies residues 1 to 19 (MFPLIILISFSFTFLSASA). Residues N29 and N41 are each glycosylated (N-linked (GlcNAc...) asparagine). C33 and C90 are joined by a disulfide. The FAD-binding PCMH-type domain occupies 68-244 (NMPKPTVIIL…YAWKIRLVKV (177 aa)). H105 bears the Pros-8alpha-FAD histidine mark. 3 N-linked (GlcNAc...) asparagine glycosylation sites follow: N359, N498, and N558.

It belongs to the oxygen-dependent FAD-linked oxidoreductase family. It depends on FAD as a cofactor. In terms of tissue distribution, mostly expressed in roots.

The protein localises to the vacuole. The protein operates within alkaloid biosynthesis; nicotine biosynthesis. Its function is as follows. Involved in the biosynthesis of pyridine alkaloid natural products, leading mainly to the production of anabasine, anatabine, nicotine and nornicotine, effective deterrents against herbivores with antiparasitic and pesticide properties (neurotoxins); nornicotine serves as the precursor in the synthesis of the carcinogen compound N'-nitrosonornicotine (NNN). Catalyzes a late oxidation step subsequent to the pyridine ring condensation reaction in the biosynthesis of alkaloids. The protein is Berberine bridge enzyme-like C-1 of Nicotiana tabacum (Common tobacco).